The chain runs to 284 residues: MEMO1 family protein Mevan_0697 (284 aa).

The protein belongs to the MEMO1 family.

The sequence is that of MEMO1 family protein Mevan_0697 from Methanococcus vannielii (strain ATCC 35089 / DSM 1224 / JCM 13029 / OCM 148 / SB).